We begin with the raw amino-acid sequence, 142 residues long: Large ribosomal subunit protein uL11 (142 aa).

It belongs to the universal ribosomal protein uL11 family. As to quaternary structure, part of the ribosomal stalk of the 50S ribosomal subunit. Interacts with L10 and the large rRNA to form the base of the stalk. L10 forms an elongated spine to which L12 dimers bind in a sequential fashion forming a multimeric L10(L12)X complex. One or more lysine residues are methylated.

Functionally, forms part of the ribosomal stalk which helps the ribosome interact with GTP-bound translation factors. The polypeptide is Large ribosomal subunit protein uL11 (Serratia proteamaculans (strain 568)).